A 494-amino-acid polypeptide reads, in one-letter code: Transcriptional regulator of yeast form adherence 3 (494 aa).

An SPX domain is found at 1–360 (MKFAKTLERT…SLGIQKTFPK (360 aa)). The RING-type zinc-finger motif lies at 398 to 437 (CPICMNIAYKPIRLSCGHLFCVRCLVKMKQDDKTSCPLCR).

It localises to the nucleus. In terms of biological role, transcription factor required for yeast cell adherence to silicone substrate. The polypeptide is Transcriptional regulator of yeast form adherence 3 (TRY3) (Candida albicans (strain SC5314 / ATCC MYA-2876) (Yeast)).